A 163-amino-acid chain; its full sequence is Nucleotide-binding protein Mflv_5248 (163 aa).

It belongs to the YajQ family.

Functionally, nucleotide-binding protein. This is Nucleotide-binding protein Mflv_5248 from Mycolicibacterium gilvum (strain PYR-GCK) (Mycobacterium gilvum (strain PYR-GCK)).